Here is a 492-residue protein sequence, read N- to C-terminus: Probable cytochrome P450 516B1 (492 aa).

The helical transmembrane segment at 1–17 (MYLILSLIIFLAYVAFH) threads the bilayer. Cys438 is a binding site for heme.

The protein belongs to the cytochrome P450 family. The cofactor is heme.

It is found in the membrane. The chain is Probable cytochrome P450 516B1 (cyp516B1) from Dictyostelium discoideum (Social amoeba).